A 422-amino-acid chain; its full sequence is 4-hydroxy-3-methylbut-2-en-1-yl diphosphate synthase (flavodoxin) (422 aa).

[4Fe-4S] cluster contacts are provided by C316, C319, C362, and E369.

It belongs to the IspG family. [4Fe-4S] cluster serves as cofactor.

The catalysed reaction is (2E)-4-hydroxy-3-methylbut-2-enyl diphosphate + oxidized [flavodoxin] + H2O + 2 H(+) = 2-C-methyl-D-erythritol 2,4-cyclic diphosphate + reduced [flavodoxin]. Its pathway is isoprenoid biosynthesis; isopentenyl diphosphate biosynthesis via DXP pathway; isopentenyl diphosphate from 1-deoxy-D-xylulose 5-phosphate: step 5/6. Functionally, converts 2C-methyl-D-erythritol 2,4-cyclodiphosphate (ME-2,4cPP) into 1-hydroxy-2-methyl-2-(E)-butenyl 4-diphosphate. The protein is 4-hydroxy-3-methylbut-2-en-1-yl diphosphate synthase (flavodoxin) of Ehrlichia canis (strain Jake).